The primary structure comprises 234 residues: RNA chaperone ProQ (234 aa).

A compositionally biased stretch (basic and acidic residues) spans 104-130; it reads LEEAKARVQAQRDARKREAAENGEKRE. The interval 104 to 186 is disordered; the sequence is LEEAKARVQA…QRSTPVTSLE (83 aa). Residues 131–142 show a composition bias toward basic residues; sequence PRRPRPAGKKPT. Composition is skewed to basic and acidic residues over residues 143–156 and 163–176; these read ARRD…EVRK and TSER…ETTE. The segment covering 177–186 has biased composition (polar residues); that stretch reads QRSTPVTSLE.

This sequence belongs to the ProQ family.

The protein resides in the cytoplasm. Functionally, RNA chaperone with significant RNA binding, RNA strand exchange and RNA duplexing activities. May regulate ProP activity through an RNA-based, post-transcriptional mechanism. The polypeptide is RNA chaperone ProQ (Edwardsiella ictaluri (strain 93-146)).